A 271-amino-acid polypeptide reads, in one-letter code: Hydroxyethylthiazole kinase (271 aa).

Met45 lines the substrate pocket. Residues Arg121 and Thr168 each contribute to the ATP site. Residue Gly195 coordinates substrate.

This sequence belongs to the Thz kinase family. Requires Mg(2+) as cofactor.

The enzyme catalyses 5-(2-hydroxyethyl)-4-methylthiazole + ATP = 4-methyl-5-(2-phosphooxyethyl)-thiazole + ADP + H(+). It functions in the pathway cofactor biosynthesis; thiamine diphosphate biosynthesis; 4-methyl-5-(2-phosphoethyl)-thiazole from 5-(2-hydroxyethyl)-4-methylthiazole: step 1/1. In terms of biological role, catalyzes the phosphorylation of the hydroxyl group of 4-methyl-5-beta-hydroxyethylthiazole (THZ). This chain is Hydroxyethylthiazole kinase, found in Bacillus pumilus (strain SAFR-032).